Here is a 39-residue protein sequence, read N- to C-terminus: Photosystem II reaction center protein Y (39 aa).

The chain crosses the membrane as a helical span at residues V5–I23.

Belongs to the PsbY family. In terms of assembly, PSII is composed of 1 copy each of membrane proteins PsbA, PsbB, PsbC, PsbD, PsbE, PsbF, PsbH, PsbI, PsbJ, PsbK, PsbL, PsbM, PsbT, PsbX, PsbY, PsbZ, Psb30/Ycf12, peripheral proteins PsbO, CyanoQ (PsbQ), PsbU, PsbV and a large number of cofactors. It forms dimeric complexes.

It is found in the cellular thylakoid membrane. Functionally, loosely associated component of the core of photosystem II (PSII), it is not always seen in crystals. PSII is a light-driven water plastoquinone oxidoreductase, using light energy to abstract electrons from H(2)O, generating a proton gradient subsequently used for ATP formation. This Microcystis aeruginosa (strain NIES-843 / IAM M-2473) protein is Photosystem II reaction center protein Y.